The sequence spans 161 residues: MVTAIYPGTFDPLTRGHEDLVRRASGLFDKLIVGVADSRNKKPFFSLEERLTISNEVLGHYPNVHVESFSGLLKDFVRRHDARVIVRGLRAVSDFEYEFQMAGMNRYLLPDVETLFLTPSDQYQFISGTIVREIATLGGDVSKFVFPSVDKWLKEKIAAQG.

Threonine 9 contacts substrate. ATP contacts are provided by residues 9-10 and histidine 17; that span reads TF. The substrate site is built by lysine 41, leucine 73, and arginine 87. ATP is bound by residues 88 to 90, glutamate 98, and 123 to 129; these read GLR and YQFISGT.

Belongs to the bacterial CoaD family. Homohexamer. The cofactor is Mg(2+).

The protein resides in the cytoplasm. It carries out the reaction (R)-4'-phosphopantetheine + ATP + H(+) = 3'-dephospho-CoA + diphosphate. Its pathway is cofactor biosynthesis; coenzyme A biosynthesis; CoA from (R)-pantothenate: step 4/5. Functionally, reversibly transfers an adenylyl group from ATP to 4'-phosphopantetheine, yielding dephospho-CoA (dPCoA) and pyrophosphate. This chain is Phosphopantetheine adenylyltransferase, found in Janthinobacterium sp. (strain Marseille) (Minibacterium massiliensis).